Consider the following 268-residue polypeptide: Imidazole glycerol phosphate synthase subunit HisF (268 aa).

Catalysis depends on residues D12 and D131.

It belongs to the HisA/HisF family. In terms of assembly, heterodimer of HisH and HisF.

The protein resides in the cytoplasm. It carries out the reaction 5-[(5-phospho-1-deoxy-D-ribulos-1-ylimino)methylamino]-1-(5-phospho-beta-D-ribosyl)imidazole-4-carboxamide + L-glutamine = D-erythro-1-(imidazol-4-yl)glycerol 3-phosphate + 5-amino-1-(5-phospho-beta-D-ribosyl)imidazole-4-carboxamide + L-glutamate + H(+). Its pathway is amino-acid biosynthesis; L-histidine biosynthesis; L-histidine from 5-phospho-alpha-D-ribose 1-diphosphate: step 5/9. Functionally, IGPS catalyzes the conversion of PRFAR and glutamine to IGP, AICAR and glutamate. The HisF subunit catalyzes the cyclization activity that produces IGP and AICAR from PRFAR using the ammonia provided by the HisH subunit. This is Imidazole glycerol phosphate synthase subunit HisF from Methanoregula boonei (strain DSM 21154 / JCM 14090 / 6A8).